The sequence spans 226 residues: Elongation factor 1-delta 2 (226 aa).

Positions 82–131 are disordered; sequence TACSVSPTADQKAPAADEEDDDDVDLFGEETEEEKKAAEERAAAVKASGK. Over residues 97–113 the composition is skewed to acidic residues; the sequence is ADEEDDDDVDLFGEETE. Basic and acidic residues predominate over residues 114 to 124; the sequence is EEKKAAEERAA.

This sequence belongs to the EF-1-beta/EF-1-delta family. EF-1 is composed of 4 subunits: alpha, beta (1B-alpha=beta'), delta (1B-beta), and gamma (1B-gamma).

EF-1-beta and EF-1-beta' stimulate the exchange of GDP bound to EF-1-alpha to GTP. The sequence is that of Elongation factor 1-delta 2 from Oryza sativa subsp. japonica (Rice).